A 500-amino-acid polypeptide reads, in one-letter code: NAD(P)H-quinone oxidoreductase chain 4, chloroplastic (500 aa).

Helical transmembrane passes span 4-24 (FPWLTIIVVLPIFAGSSIFFF), 35-55 (YTICICLLELLLTTYAFCYHF), 87-107 (IGPVLLTGFITTLATLAAWPV), 113-130 (LFHFLMLAMYSGQIGSFS), 134-154 (LLLFFIMWELELIPVYLLLSM), 167-187 (FILYTAGGSIFLLIGVSGMGL), 208-228 (ALEILLYFGFFIAYAVKLPII), 242-262 (HYSTCMLLAGILLKMGAYGLV), 272-292 (AHSIFSPWLMIVGTIQIIYAA), 305-325 (IAYSSVSHMGFTILGISSITD), 330-350 (GAILQMISHGFIGAALFFLAG), 386-406 (LALPGMSGFVAELVVFFGIIT), 416-436 (ILITFVTAIGMILTPIYSLSM), and 463-483 (FVSICIFLPVIGIGIYPDFVF).

This sequence belongs to the complex I subunit 4 family.

It is found in the plastid. The protein resides in the chloroplast thylakoid membrane. It catalyses the reaction a plastoquinone + NADH + (n+1) H(+)(in) = a plastoquinol + NAD(+) + n H(+)(out). It carries out the reaction a plastoquinone + NADPH + (n+1) H(+)(in) = a plastoquinol + NADP(+) + n H(+)(out). The protein is NAD(P)H-quinone oxidoreductase chain 4, chloroplastic of Nandina domestica (Heavenly bamboo).